The primary structure comprises 1262 residues: DNA-directed RNA polymerase subunit beta' (1262 aa).

The Zn(2+) site is built by C220, C294, C301, and C304.

It belongs to the RNA polymerase beta' chain family. RpoC2 subfamily. In cyanobacteria the RNAP catalytic core is composed of 2 alpha, 1 beta, 1 beta', 1 gamma and 1 omega subunit. When a sigma factor is associated with the core the holoenzyme is formed, which can initiate transcription. Zn(2+) serves as cofactor.

The catalysed reaction is RNA(n) + a ribonucleoside 5'-triphosphate = RNA(n+1) + diphosphate. DNA-dependent RNA polymerase catalyzes the transcription of DNA into RNA using the four ribonucleoside triphosphates as substrates. This chain is DNA-directed RNA polymerase subunit beta', found in Gloeobacter violaceus (strain ATCC 29082 / PCC 7421).